Here is a 363-residue protein sequence, read N- to C-terminus: uncharacterized protein (363 aa).

A coiled-coil region spans residues 109–329 (RAALRELRSR…VEELQAQTRE (221 aa)).

This is an uncharacterized protein from Homo sapiens (Human).